The chain runs to 608 residues: Threonine--tRNA ligase (608 aa).

The editing domain stretch occupies residues 1 to 144 (MRILLIHSDY…SRTITAEEEE (144 aa)). The tract at residues 195–489 (PHVKLMREKE…ELDEKAPMLP (295 aa)) is catalytic. Residues Cys286, His338, and His459 each coordinate Zn(2+).

This sequence belongs to the class-II aminoacyl-tRNA synthetase family. As to quaternary structure, homodimer. Requires Zn(2+) as cofactor.

Its subcellular location is the cytoplasm. The enzyme catalyses tRNA(Thr) + L-threonine + ATP = L-threonyl-tRNA(Thr) + AMP + diphosphate + H(+). Its function is as follows. Catalyzes the attachment of threonine to tRNA(Thr) in a two-step reaction: L-threonine is first activated by ATP to form Thr-AMP and then transferred to the acceptor end of tRNA(Thr). Also edits incorrectly charged L-seryl-tRNA(Thr). The polypeptide is Threonine--tRNA ligase (Methanobrevibacter smithii (strain ATCC 35061 / DSM 861 / OCM 144 / PS)).